A 328-amino-acid chain; its full sequence is Ethanol acetyltransferase 1 (328 aa).

The 271-residue stretch at 39–309 folds into the AB hydrolase-1 domain; the sequence is PAIINIHGLL…TGHNLLLENP (271 aa). Catalysis depends on charge relay system residues Ser115, Asp139, and His302.

Belongs to the AB hydrolase superfamily.

The protein resides in the mitochondrion. The enzyme catalyses ethanol + acetyl-CoA = ethyl acetate + CoA. The catalysed reaction is acetyl-CoA + H2O = acetate + CoA + H(+). It catalyses the reaction ethyl acetate + H2O = ethanol + acetate + H(+). Its function is as follows. Alcohol acetyltransferase that catalyzes the synthesis of ethyl acetate from ethanol and acetyl-CoA. Can also function as a thioesterase by hydrolyzing acetyl-CoA in the absence of ethanol, as well as esterase hydrolyzing ethyl acetate. In Saccharomyces cerevisiae (strain ATCC 204508 / S288c) (Baker's yeast), this protein is Ethanol acetyltransferase 1.